The following is a 321-amino-acid chain: Lipoyl synthase (321 aa).

[4Fe-4S] cluster contacts are provided by cysteine 68, cysteine 73, cysteine 79, cysteine 94, cysteine 98, cysteine 101, and serine 308. The Radical SAM core domain occupies 80 to 297; sequence FNHGTATFMI…KEIALELGFT (218 aa).

The protein belongs to the radical SAM superfamily. Lipoyl synthase family. [4Fe-4S] cluster is required as a cofactor.

The protein localises to the cytoplasm. It catalyses the reaction [[Fe-S] cluster scaffold protein carrying a second [4Fe-4S](2+) cluster] + N(6)-octanoyl-L-lysyl-[protein] + 2 oxidized [2Fe-2S]-[ferredoxin] + 2 S-adenosyl-L-methionine + 4 H(+) = [[Fe-S] cluster scaffold protein] + N(6)-[(R)-dihydrolipoyl]-L-lysyl-[protein] + 4 Fe(3+) + 2 hydrogen sulfide + 2 5'-deoxyadenosine + 2 L-methionine + 2 reduced [2Fe-2S]-[ferredoxin]. It functions in the pathway protein modification; protein lipoylation via endogenous pathway; protein N(6)-(lipoyl)lysine from octanoyl-[acyl-carrier-protein]: step 2/2. Catalyzes the radical-mediated insertion of two sulfur atoms into the C-6 and C-8 positions of the octanoyl moiety bound to the lipoyl domains of lipoate-dependent enzymes, thereby converting the octanoylated domains into lipoylated derivatives. In Vibrio cholerae serotype O1 (strain ATCC 39541 / Classical Ogawa 395 / O395), this protein is Lipoyl synthase.